Here is a 945-residue protein sequence, read N- to C-terminus: Kinesin-like protein CIN8 (945 aa).

One can recognise a Kinesin motor domain in the interval 22–409 (NITVAVRCRG…LEYAAKAKNI (388 aa)). 114–121 (GMTSTGKT) provides a ligand contact to ATP. Residues 190–243 (IFDSSSMNHSSRASSQSNSPREPEVAHNGFSRRRQRPPPVKANRMSATKQQLSE) form a disordered region. Low complexity predominate over residues 193–208 (SSSMNHSSRASSQSNS). A compositionally biased stretch (polar residues) spans 234 to 243 (MSATKQQLSE). Coiled-coil stretches lie at residues 450-562 (MSHE…DIKE) and 634-675 (LKEF…YLDQ).

This sequence belongs to the TRAFAC class myosin-kinesin ATPase superfamily. Kinesin family. BimC subfamily.

The protein resides in the cytoplasm. The protein localises to the cytoskeleton. It localises to the spindle. Elongates the mitotic spindle by interacting with spindle microtubules to generate an outward force pushing spindle poles apart. Following spindle assembly, CIN8 and KIP1 apparently act to oppose a force, possibly generated by KAR3, that draws separated poles back together. The sequence is that of Kinesin-like protein CIN8 (CIN8) from Eremothecium gossypii (strain ATCC 10895 / CBS 109.51 / FGSC 9923 / NRRL Y-1056) (Yeast).